A 329-amino-acid polypeptide reads, in one-letter code: ATP phosphoribosyltransferase regulatory subunit (329 aa).

Belongs to the class-II aminoacyl-tRNA synthetase family. HisZ subfamily. Heteromultimer composed of HisG and HisZ subunits.

Its subcellular location is the cytoplasm. Its pathway is amino-acid biosynthesis; L-histidine biosynthesis; L-histidine from 5-phospho-alpha-D-ribose 1-diphosphate: step 1/9. In terms of biological role, required for the first step of histidine biosynthesis. May allow the feedback regulation of ATP phosphoribosyltransferase activity by histidine. The chain is ATP phosphoribosyltransferase regulatory subunit from Streptococcus gordonii (strain Challis / ATCC 35105 / BCRC 15272 / CH1 / DL1 / V288).